We begin with the raw amino-acid sequence, 576 residues long: Lysine--tRNA ligase (576 aa).

Positions 412 and 419 each coordinate Mg(2+).

It belongs to the class-II aminoacyl-tRNA synthetase family. Homodimer. Mg(2+) serves as cofactor.

It localises to the cytoplasm. The enzyme catalyses tRNA(Lys) + L-lysine + ATP = L-lysyl-tRNA(Lys) + AMP + diphosphate. The sequence is that of Lysine--tRNA ligase from Parabacteroides distasonis (strain ATCC 8503 / DSM 20701 / CIP 104284 / JCM 5825 / NCTC 11152).